Consider the following 247-residue polypeptide: Inhibitory synaptic factor 1 (247 aa).

Residues 30–65 (RAVIGQLEGILRDLKEVAKELKEVVEQIDRLTSDFE) are a coiled coil. Disordered stretches follow at residues 69–90 (DTDD…GGPL), 112–166 (ASTP…RDRV), and 180–217 (DDSE…GVRK). Residues 76 to 85 (GTVSSTSSSE) are compositionally biased toward polar residues.

Belongs to the INSYN1 family.

Its subcellular location is the postsynaptic density. May be a component of the protein machinery at the inhibitory synapses, probably acting as a scaffold. This chain is Inhibitory synaptic factor 1, found in Xenopus laevis (African clawed frog).